A 147-amino-acid polypeptide reads, in one-letter code: Delta-latroinsectotoxin-Lhe1a (147 aa).

ANK repeat units follow at residues Val-57–Ile-59, Asn-66–Lys-78, Lys-79–Ala-96, and Thr-98–Glu-125.

It belongs to the cationic peptide 01 (latrotoxin) family. 04 (delta-latroinsectotoxin) subfamily. As to quaternary structure, homotetramer in membrane. In terms of tissue distribution, expressed by the venom gland.

It is found in the secreted. It localises to the target cell membrane. Insecticidal presynaptic neurotoxin that induces massive neurotransmitter release at insect (but not vertebrate) neuromuscular junctions. Native toxin forms cation-permeable pores (with high permeability to calcium) in lipid membranes locust muscle membrane and artificial lipid bilayers. May bind to insect neurexin-1 homolog, insect adhesion G protein-coupled receptor L1 homolog, and insect receptor-type tyrosine-protein phosphatase S homolog, and induces neurotransmitter exocytosis both by forming tetrameric pores in membranes and signaling via G protein-coupled receptor. Oligomerization is a process independent of divalent cations. The sequence is that of Delta-latroinsectotoxin-Lhe1a from Latrodectus hesperus (Western black widow spider).